We begin with the raw amino-acid sequence, 337 residues long: Inositol 2-dehydrogenase (337 aa).

This sequence belongs to the Gfo/Idh/MocA family. Homotetramer.

It catalyses the reaction myo-inositol + NAD(+) = scyllo-inosose + NADH + H(+). Involved in the oxidation of myo-inositol (MI) to 2-keto-myo-inositol (2KMI or 2-inosose). This Ralstonia nicotianae (strain ATCC BAA-1114 / GMI1000) (Ralstonia solanacearum) protein is Inositol 2-dehydrogenase.